The chain runs to 565 residues: Pentatricopeptide repeat-containing protein At3g20730 (565 aa).

14 PPR repeats span residues 12–46 (SPSL…GFCS), 47–77 (NLQL…ISKR), 78–112 (DVVS…DVKA), 113–147 (NQFT…NCAG), 148–178 (NLIV…MKER), 179–213 (DLVS…GKKP), 214–248 (DCFT…GFGR), 249–279 (SSAL…TKKR), 280–315 (DLLS…KTKM), 316–351 (DEVV…QIRF), 352–382 (DVAL…MKEK), 383–417 (DVRS…RIKP), 418–448 (NDVT…MINK), and 454–484 (REEH…KEGI). Residues 491 to 565 (TWGAFLDACR…NKAPGYSLVY (75 aa)) form a type E motif; degenerate region.

Belongs to the PPR family. PCMP-E subfamily.

This chain is Pentatricopeptide repeat-containing protein At3g20730 (PCMP-E94), found in Arabidopsis thaliana (Mouse-ear cress).